A 175-amino-acid polypeptide reads, in one-letter code: 2-oxo-4-hydroxy-4-carboxy-5-ureidoimidazoline decarboxylase (175 aa).

The active-site Proton donor is His67. Residues Pro68, 84–88 (SQNEQ), and 119–123 (FVICA) each bind substrate. Residues 173–175 (TKL) carry the Microbody targeting signal motif.

Belongs to the OHCU decarboxylase family.

The protein resides in the peroxisome. It catalyses the reaction 5-hydroxy-2-oxo-4-ureido-2,5-dihydro-1H-imidazole-5-carboxylate + H(+) = (S)-allantoin + CO2. Its pathway is purine metabolism; urate degradation; (S)-allantoin from urate: step 3/3. Its function is as follows. Catalyzes the stereoselective decarboxylation of 2-oxo-4-hydroxy-4-carboxy-5-ureidoimidazoline (OHCU) to (S)-allantoin. The chain is 2-oxo-4-hydroxy-4-carboxy-5-ureidoimidazoline decarboxylase (urad) from Xenopus laevis (African clawed frog).